Consider the following 172-residue polypeptide: Peptidyl-tRNA hydrolase (172 aa).

Tyr-10 is a tRNA binding site. His-15 acts as the Proton acceptor in catalysis. The tRNA site is built by Phe-59, Asn-61, and Asn-101.

Belongs to the PTH family. In terms of assembly, monomer.

It localises to the cytoplasm. It catalyses the reaction an N-acyl-L-alpha-aminoacyl-tRNA + H2O = an N-acyl-L-amino acid + a tRNA + H(+). In terms of biological role, hydrolyzes ribosome-free peptidyl-tRNAs (with 1 or more amino acids incorporated), which drop off the ribosome during protein synthesis, or as a result of ribosome stalling. Catalyzes the release of premature peptidyl moieties from peptidyl-tRNA molecules trapped in stalled 50S ribosomal subunits, and thus maintains levels of free tRNAs and 50S ribosomes. The protein is Peptidyl-tRNA hydrolase of Rubrobacter xylanophilus (strain DSM 9941 / JCM 11954 / NBRC 16129 / PRD-1).